The sequence spans 1392 residues: Condensin complex subunit 1 (1392 aa).

The tract at residues 1–593 (MSPHNFEFHL…TGSKDSPSVP (593 aa)) is interaction with SMC2 and SMC4. 2 positions are modified to phosphoserine: Ser-20 and Ser-575. 3 disordered regions span residues 569-602 (EAST…QSND), 945-966 (REEQ…ETTM), and 1293-1392 (FETG…RHRS). A compositionally biased stretch (basic and acidic residues) spans 945–960 (REEQEHRAKEPKEKTA). Residues Ser-1300, Ser-1305, Ser-1320, and Ser-1323 each carry the phosphoserine modification. Phosphothreonine is present on Thr-1329. The short motif at 1332 to 1353 (PRRTKPGRPQTQQRKKSQRKAK) is the Bipartite nuclear localization signal element. The span at 1344–1353 (QRKKSQRKAK) shows a compositional bias: basic residues. Phosphoserine is present on residues Ser-1358, Ser-1361, Ser-1362, and Ser-1367. Positions 1360–1373 (ESSEDELSAEMTEE) are enriched in acidic residues. Phosphothreonine; by CDK1 is present on residues Thr-1375 and Thr-1380. Position 1386 is a phosphoserine (Ser-1386).

Belongs to the CND1 (condensin subunit 1) family. In terms of assembly, component of the condensin complex, which contains the SMC2 and SMC4 heterodimer, and three non SMC subunits that probably regulate the complex: NCAPH/BRRN1, NCAPD2/CAPD2 and NCAPG. Interacts with histones H1 and H3. Post-translationally, phosphorylated by CDK1. Its phosphorylation, as well as that of NCAPH and NCAPG subunits, activates the condensin complex and is required for chromosome condensation.

The protein resides in the nucleus. It is found in the cytoplasm. The protein localises to the chromosome. Its function is as follows. Regulatory subunit of the condensin complex, a complex required for conversion of interphase chromatin into mitotic-like condense chromosomes. The condensin complex probably introduces positive supercoils into relaxed DNA in the presence of type I topoisomerases and converts nicked DNA into positive knotted forms in the presence of type II topoisomerases. May target the condensin complex to DNA via its C-terminal domain. May promote the resolution of double-strand DNA catenanes (intertwines) between sister chromatids. Condensin-mediated compaction likely increases tension in catenated sister chromatids, providing directionality for type II topoisomerase-mediated strand exchanges toward chromatid decatenation. Required for decatenation of non-centromeric ultrafine DNA bridges during anaphase. Early in neurogenesis, may play an essential role to ensure accurate mitotic chromosome condensation in neuron stem cells, ultimately affecting neuron pool and cortex size. In Mus musculus (Mouse), this protein is Condensin complex subunit 1 (Ncapd2).